The primary structure comprises 302 residues: Succinate--CoA ligase [ADP-forming] subunit alpha (302 aa).

Residues 17 to 20 (TGST), Lys43, and 96 to 98 (ITE) contribute to the CoA site. Tyr159 serves as a coordination point for substrate. The active-site Tele-phosphohistidine intermediate is the His247.

The protein belongs to the succinate/malate CoA ligase alpha subunit family. In terms of assembly, heterotetramer of two alpha and two beta subunits.

It carries out the reaction succinate + ATP + CoA = succinyl-CoA + ADP + phosphate. It catalyses the reaction GTP + succinate + CoA = succinyl-CoA + GDP + phosphate. It functions in the pathway carbohydrate metabolism; tricarboxylic acid cycle; succinate from succinyl-CoA (ligase route): step 1/1. Its function is as follows. Succinyl-CoA synthetase functions in the citric acid cycle (TCA), coupling the hydrolysis of succinyl-CoA to the synthesis of either ATP or GTP and thus represents the only step of substrate-level phosphorylation in the TCA. The alpha subunit of the enzyme binds the substrates coenzyme A and phosphate, while succinate binding and nucleotide specificity is provided by the beta subunit. The sequence is that of Succinate--CoA ligase [ADP-forming] subunit alpha from Staphylococcus aureus (strain MRSA252).